Consider the following 45-residue polypeptide: Large ribosomal subunit protein bL34 (45 aa).

The disordered stretch occupies residues 1–27 (MTKRTLGGTSRKRKRVSGFRVRMRTHT). Residues 10 to 27 (SRKRKRVSGFRVRMRTHT) are compositionally biased toward basic residues.

Belongs to the bacterial ribosomal protein bL34 family.

The protein is Large ribosomal subunit protein bL34 of Prochlorococcus marinus (strain MIT 9211).